The sequence spans 724 residues: Catalase-peroxidase (724 aa).

A cross-link (tryptophyl-tyrosyl-methioninium (Trp-Tyr) (with M-251)) is located at residues 96–225; sequence WHAAGTYRVA…LAAVMMGLIY (130 aa). H97 (proton acceptor) is an active-site residue. The segment at residues 225-251 is a cross-link (tryptophyl-tyrosyl-methioninium (Tyr-Met) (with W-96)); the sequence is YVNPEGVDGNPDPLRTAEDVRITFERM. H266 provides a ligand contact to heme b.

This sequence belongs to the peroxidase family. Peroxidase/catalase subfamily. In terms of assembly, homodimer or homotetramer. It depends on heme b as a cofactor. In terms of processing, formation of the three residue Trp-Tyr-Met cross-link is important for the catalase, but not the peroxidase activity of the enzyme.

It catalyses the reaction H2O2 + AH2 = A + 2 H2O. The enzyme catalyses 2 H2O2 = O2 + 2 H2O. Bifunctional enzyme with both catalase and broad-spectrum peroxidase activity. This chain is Catalase-peroxidase, found in Halorhodospira halophila (strain DSM 244 / SL1) (Ectothiorhodospira halophila (strain DSM 244 / SL1)).